The primary structure comprises 99 residues: CTP synthase (99 aa).

Residues Thr1 to Lys99 form the Glutamine amidotransferase type-1 domain. Arg28 contacts L-glutamine. Residues His73 and Glu75 contribute to the active site.

Belongs to the CTP synthase family. As to quaternary structure, homotetramer.

The enzyme catalyses UTP + L-glutamine + ATP + H2O = CTP + L-glutamate + ADP + phosphate + 2 H(+). The catalysed reaction is L-glutamine + H2O = L-glutamate + NH4(+). It catalyses the reaction UTP + NH4(+) + ATP = CTP + ADP + phosphate + 2 H(+). It participates in pyrimidine metabolism; CTP biosynthesis via de novo pathway; CTP from UDP: step 2/2. Its activity is regulated as follows. Allosterically activated by GTP, when glutamine is the substrate; GTP has no effect on the reaction when ammonia is the substrate. The allosteric effector GTP functions by stabilizing the protein conformation that binds the tetrahedral intermediate(s) formed during glutamine hydrolysis. Inhibited by the product CTP, via allosteric rather than competitive inhibition. In terms of biological role, catalyzes the ATP-dependent amination of UTP to CTP with either L-glutamine or ammonia as the source of nitrogen. Regulates intracellular CTP levels through interactions with the four ribonucleotide triphosphates. The polypeptide is CTP synthase (Mycoplasma capricolum subsp. capripneumoniae).